The following is a 511-amino-acid chain: ADP,ATP carrier protein 4 (511 aa).

A run of 12 helical transmembrane segments spans residues 34 to 54 (VSKFLFITLLMFCILFIQNLI), 70 to 90 (IISFLKFWGVMPSAFLMTAIY), 102 to 122 (IFYLIISIFLTFFALFAYVIF), 157 to 177 (FSLFYIIAELWPNVVFALLFW), 192 to 212 (FYPLFGLLSQTGIYLAGQFLE), 231 to 251 (FHTLSIQIILTIVLILGIIAI), 296 to 316 (LIATLLICYGIAINLVEGPWK), 330 to 350 (AAFIGSYLSYTGVFTILFVVL), 361 to 381 (FTAAVITPLIVFITGILFFAV), 390 to 410 (LIIANFILTDPALIAITIGAI), 453 to 473 (LGKSGSAFLQSLVFIILPSAS), and 476 to 496 (SISTCLMIIFIITCLTWLWAT).

Belongs to the ADP/ATP translocase tlc family.

It localises to the cell membrane. In terms of biological role, provides the rickettsial cell with host ATP in exchange for rickettsial ADP. This is an obligate exchange system. This energy acquiring activity is an important component of rickettsial parasitism. In Rickettsia conorii (strain ATCC VR-613 / Malish 7), this protein is ADP,ATP carrier protein 4 (tlcD).